The primary structure comprises 283 residues: Glutamate racemase (283 aa).

Residues 28–29 and 60–61 contribute to the substrate site; these read DS and YG. Cys-92 functions as the Proton donor/acceptor in the catalytic mechanism. 93 to 94 is a binding site for substrate; the sequence is NT. Catalysis depends on Cys-204, which acts as the Proton donor/acceptor. 205 to 206 serves as a coordination point for substrate; sequence TH.

This sequence belongs to the aspartate/glutamate racemases family.

The enzyme catalyses L-glutamate = D-glutamate. Its pathway is cell wall biogenesis; peptidoglycan biosynthesis. In terms of biological role, provides the (R)-glutamate required for cell wall biosynthesis. This Salmonella choleraesuis (strain SC-B67) protein is Glutamate racemase.